Reading from the N-terminus, the 97-residue chain is Large ribosomal subunit protein uL23 (97 aa).

The protein belongs to the universal ribosomal protein uL23 family. In terms of assembly, part of the 50S ribosomal subunit. Contacts protein L29, and trigger factor when it is bound to the ribosome.

Functionally, one of the early assembly proteins it binds 23S rRNA. One of the proteins that surrounds the polypeptide exit tunnel on the outside of the ribosome. Forms the main docking site for trigger factor binding to the ribosome. The polypeptide is Large ribosomal subunit protein uL23 (Agrobacterium fabrum (strain C58 / ATCC 33970) (Agrobacterium tumefaciens (strain C58))).